The chain runs to 369 residues: Flagellar P-ring protein (369 aa).

The first 24 residues, 1–24 (MSKTISLLKFIICILISLCSFTYA), serve as a signal peptide directing secretion.

The protein belongs to the FlgI family. The basal body constitutes a major portion of the flagellar organelle and consists of four rings (L,P,S, and M) mounted on a central rod.

Its subcellular location is the bacterial flagellum basal body. In terms of biological role, assembles around the rod to form the L-ring and probably protects the motor/basal body from shearing forces during rotation. In Buchnera aphidicola subsp. Schizaphis graminum (strain Sg), this protein is Flagellar P-ring protein.